The following is a 197-amino-acid chain: Probable molybdenum cofactor guanylyltransferase (197 aa).

GTP contacts are provided by residues 9 to 11 (LAG), Lys-21, Asp-65, and Asp-94. Asp-94 serves as a coordination point for Mg(2+).

It belongs to the MobA family. It depends on Mg(2+) as a cofactor.

The protein localises to the cytoplasm. The catalysed reaction is Mo-molybdopterin + GTP + H(+) = Mo-molybdopterin guanine dinucleotide + diphosphate. In terms of biological role, transfers a GMP moiety from GTP to Mo-molybdopterin (Mo-MPT) cofactor (Moco or molybdenum cofactor) to form Mo-molybdopterin guanine dinucleotide (Mo-MGD) cofactor. In Carboxydothermus hydrogenoformans (strain ATCC BAA-161 / DSM 6008 / Z-2901), this protein is Probable molybdenum cofactor guanylyltransferase.